Here is a 236-residue protein sequence, read N- to C-terminus: Opacity protein opA50 (236 aa).

Ala-1 is a signal peptide.

Belongs to the opacity porin family.

The protein resides in the cell outer membrane. Implicated in a number of adherence functions. OPA proteins are implicated in pathogenesis and are subject to phase variation. The chain is Opacity protein opA50 (opaC) from Neisseria gonorrhoeae.